Here is a 155-residue protein sequence, read N- to C-terminus: MKVEVDSFSGAKIYPGRGTLFVRGDSKIFRFQNSKSASLFKQRKNPRRIAWTVLFRKHHKKGITEEVAKKRSRKTVKAQRPITGASLDLIKERRSLKPEVRKANREEKLKANKEKKRAEKAARKAEKAKSAGVQGSKVSKQQAKGAFQKVAATSR.

Phosphoserine is present on S7. The tract at residues 66–155 (EVAKKRSRKT…AFQKVAATSR (90 aa)) is disordered. Positions 89–129 (LIKERRSLKPEVRKANREEKLKANKEKKRAEKAARKAEKAK) are enriched in basic and acidic residues.

It belongs to the eukaryotic ribosomal protein eL24 family. Component of the large ribosomal subunit (LSU). Mature yeast ribosomes consist of a small (40S) and a large (60S) subunit. The 40S small subunit contains 1 molecule of ribosomal RNA (18S rRNA) and 33 different proteins (encoded by 57 genes). The large 60S subunit contains 3 rRNA molecules (25S, 5.8S and 5S rRNA) and 46 different proteins (encoded by 81 genes).

It is found in the cytoplasm. Component of the ribosome, a large ribonucleoprotein complex responsible for the synthesis of proteins in the cell. The small ribosomal subunit (SSU) binds messenger RNAs (mRNAs) and translates the encoded message by selecting cognate aminoacyl-transfer RNA (tRNA) molecules. The large subunit (LSU) contains the ribosomal catalytic site termed the peptidyl transferase center (PTC), which catalyzes the formation of peptide bonds, thereby polymerizing the amino acids delivered by tRNAs into a polypeptide chain. The nascent polypeptides leave the ribosome through a tunnel in the LSU and interact with protein factors that function in enzymatic processing, targeting, and the membrane insertion of nascent chains at the exit of the ribosomal tunnel. The sequence is that of Large ribosomal subunit protein eL24B from Saccharomyces cerevisiae (strain ATCC 204508 / S288c) (Baker's yeast).